The chain runs to 251 residues: Cell division protein ZapD (251 aa).

Belongs to the ZapD family. Interacts with FtsZ.

The protein localises to the cytoplasm. Functionally, cell division factor that enhances FtsZ-ring assembly. Directly interacts with FtsZ and promotes bundling of FtsZ protofilaments, with a reduction in FtsZ GTPase activity. In Paraburkholderia phymatum (strain DSM 17167 / CIP 108236 / LMG 21445 / STM815) (Burkholderia phymatum), this protein is Cell division protein ZapD.